The following is a 114-amino-acid chain: Hydrogenase maturation factor HypA (114 aa).

Residue H2 participates in Ni(2+) binding. Positions 73, 76, 89, and 92 each coordinate Zn(2+).

Belongs to the HypA/HybF family.

In terms of biological role, involved in the maturation of [NiFe] hydrogenases. Required for nickel insertion into the metal center of the hydrogenase. This is Hydrogenase maturation factor HypA from Desulfitobacterium hafniense (strain DSM 10664 / DCB-2).